A 205-amino-acid chain; its full sequence is MCKGLAGLPASCLRSAKDMKHRLGFLLQKSDSCEHNSSHSKKDKVVICQRVSHEEVKKWAESLENLISHECGLAAFKAFLKSEYSEENIDFWISCEEYKKIKSPSKLSPKAKKIYNEFISVQATKEVNLDSCTREETSRNMLEPTITCFDEAQRKIFNLMEKDSYRRFLKSRFYLDLVNLSSCGSEKQKGAKSSTDCASLVPQCA.

S-palmitoyl cysteine attachment occurs at residues Cys-2, Cys-12, and Cys-95. The RGS domain maps to Ser-62–Val-178.

Post-translationally, palmitoylated on Cys-2 and/or Cys-12. In terms of processing, phosphorylated by cyclic GMP-dependent protein kinase.

Its function is as follows. Inhibits signal transduction by increasing the GTPase activity of G protein alpha subunits thereby driving them into their inactive GDP-bound form. Activity on G(z)-alpha is inhibited by phosphorylation of the G-protein. Activity on G(z)-alpha and G(i)-alpha-1 is inhibited by palmitoylation of the G-protein. The protein is Regulator of G-protein signaling 4 (RGS4) of Bos taurus (Bovine).